The following is a 307-amino-acid chain: Ubiquinol oxidase subunit 2 (307 aa).

An N-terminal signal peptide occupies residues 1–23 (MKNKLLARVARLGGLSSALLLAG). C24 is lipidated: N-palmitoyl cysteine. The S-diacylglycerol cysteine moiety is linked to residue C24. The next 2 membrane-spanning stretches (helical) occupy residues 46–66 (STVAMLIVVIPTILETLLFAW) and 87–107 (IEVTIWGVPSLIILFLAVITY).

The protein belongs to the cytochrome c oxidase subunit 2 family. As to quaternary structure, heterotetramer of the subunits 1, 2, 3 and 4.

Its subcellular location is the cell membrane. The sequence is that of Ubiquinol oxidase subunit 2 (cyaB) from Acetobacter aceti.